The sequence spans 283 residues: Phosphatidylserine decarboxylase proenzyme (283 aa).

Active-site charge relay system; for autoendoproteolytic cleavage activity residues include Asp89, His146, and Ser249. Ser249 serves as the catalytic Schiff-base intermediate with substrate; via pyruvic acid; for decarboxylase activity. The residue at position 249 (Ser249) is a Pyruvic acid (Ser); by autocatalysis.

This sequence belongs to the phosphatidylserine decarboxylase family. PSD-B subfamily. Prokaryotic type I sub-subfamily. In terms of assembly, heterodimer of a large membrane-associated beta subunit and a small pyruvoyl-containing alpha subunit. Pyruvate is required as a cofactor. Post-translationally, is synthesized initially as an inactive proenzyme. Formation of the active enzyme involves a self-maturation process in which the active site pyruvoyl group is generated from an internal serine residue via an autocatalytic post-translational modification. Two non-identical subunits are generated from the proenzyme in this reaction, and the pyruvate is formed at the N-terminus of the alpha chain, which is derived from the carboxyl end of the proenzyme. The autoendoproteolytic cleavage occurs by a canonical serine protease mechanism, in which the side chain hydroxyl group of the serine supplies its oxygen atom to form the C-terminus of the beta chain, while the remainder of the serine residue undergoes an oxidative deamination to produce ammonia and the pyruvoyl prosthetic group on the alpha chain. During this reaction, the Ser that is part of the protease active site of the proenzyme becomes the pyruvoyl prosthetic group, which constitutes an essential element of the active site of the mature decarboxylase.

Its subcellular location is the cell membrane. It catalyses the reaction a 1,2-diacyl-sn-glycero-3-phospho-L-serine + H(+) = a 1,2-diacyl-sn-glycero-3-phosphoethanolamine + CO2. It participates in phospholipid metabolism; phosphatidylethanolamine biosynthesis; phosphatidylethanolamine from CDP-diacylglycerol: step 2/2. In terms of biological role, catalyzes the formation of phosphatidylethanolamine (PtdEtn) from phosphatidylserine (PtdSer). This chain is Phosphatidylserine decarboxylase proenzyme, found in Legionella pneumophila (strain Corby).